We begin with the raw amino-acid sequence, 597 residues long: Aspartate--tRNA(Asp/Asn) ligase (597 aa).

E175 contributes to the L-aspartate binding site. The segment at Q199–K202 is aspartate. An L-aspartate-binding site is contributed by R221. Residues R221–E223 and Q230 each bind ATP. H453 lines the L-aspartate pocket. E487 provides a ligand contact to ATP. Residue R494 participates in L-aspartate binding. G539–R542 contacts ATP. Residues S562 to N597 form a disordered region. Over residues E579–K589 the composition is skewed to basic and acidic residues.

It belongs to the class-II aminoacyl-tRNA synthetase family. Type 1 subfamily. Homodimer.

It is found in the cytoplasm. It carries out the reaction tRNA(Asx) + L-aspartate + ATP = L-aspartyl-tRNA(Asx) + AMP + diphosphate. Functionally, aspartyl-tRNA synthetase with relaxed tRNA specificity since it is able to aspartylate not only its cognate tRNA(Asp) but also tRNA(Asn). Reaction proceeds in two steps: L-aspartate is first activated by ATP to form Asp-AMP and then transferred to the acceptor end of tRNA(Asp/Asn). The polypeptide is Aspartate--tRNA(Asp/Asn) ligase (Corynebacterium kroppenstedtii (strain DSM 44385 / JCM 11950 / CIP 105744 / CCUG 35717)).